Consider the following 245-residue polypeptide: Ubiquinone/menaquinone biosynthesis C-methyltransferase UbiE (245 aa).

Residues Thr-71, Asp-92, and 118–119 each bind S-adenosyl-L-methionine; that span reads DA.

The protein belongs to the class I-like SAM-binding methyltransferase superfamily. MenG/UbiE family.

It catalyses the reaction a 2-demethylmenaquinol + S-adenosyl-L-methionine = a menaquinol + S-adenosyl-L-homocysteine + H(+). The catalysed reaction is a 2-methoxy-6-(all-trans-polyprenyl)benzene-1,4-diol + S-adenosyl-L-methionine = a 5-methoxy-2-methyl-3-(all-trans-polyprenyl)benzene-1,4-diol + S-adenosyl-L-homocysteine + H(+). The protein operates within quinol/quinone metabolism; menaquinone biosynthesis; menaquinol from 1,4-dihydroxy-2-naphthoate: step 2/2. It participates in cofactor biosynthesis; ubiquinone biosynthesis. Methyltransferase required for the conversion of demethylmenaquinol (DMKH2) to menaquinol (MKH2) and the conversion of 2-polyprenyl-6-methoxy-1,4-benzoquinol (DDMQH2) to 2-polyprenyl-3-methyl-6-methoxy-1,4-benzoquinol (DMQH2). The polypeptide is Ubiquinone/menaquinone biosynthesis C-methyltransferase UbiE (Neisseria gonorrhoeae (strain ATCC 700825 / FA 1090)).